A 289-amino-acid polypeptide reads, in one-letter code: BTB/POZ domain-containing protein KCTD7 (289 aa).

Residues 1-10 show a composition bias toward polar residues; the sequence is MVVVTGQSKG. Positions 1-35 are disordered; that stretch reads MVVVTGQSKGSGDPDEAMSSSDAEDDFQEPATPTA. The 99-residue stretch at 51-149 folds into the BTB domain; that stretch reads EVVPLNVGGM…HLEDVQPLKG (99 aa).

It is found in the cell membrane. The protein resides in the cytoplasm. The protein localises to the cytosol. May be involved in the control of excitability of cortical neurons. The polypeptide is BTB/POZ domain-containing protein KCTD7 (KCTD7) (Gallus gallus (Chicken)).